A 425-amino-acid chain; its full sequence is Adenylosuccinate synthetase (425 aa).

GTP is bound by residues 12–18 (GDEGKAK) and 40–42 (GHT). Catalysis depends on Asp-13, which acts as the Proton acceptor. The Mg(2+) site is built by Asp-13 and Gly-40. Residues 13–16 (DEGK), 38–41 (NAGH), Thr-130, Arg-144, Gln-224, Thr-239, and Arg-303 each bind IMP. His-41 (proton donor) is an active-site residue. 299 to 305 (ATTGRPR) serves as a coordination point for substrate. GTP is bound by residues Arg-305, 331–333 (KID), and 411–413 (STG).

Belongs to the adenylosuccinate synthetase family. In terms of assembly, homodimer. Mg(2+) is required as a cofactor.

The protein resides in the cytoplasm. It carries out the reaction IMP + L-aspartate + GTP = N(6)-(1,2-dicarboxyethyl)-AMP + GDP + phosphate + 2 H(+). It functions in the pathway purine metabolism; AMP biosynthesis via de novo pathway; AMP from IMP: step 1/2. Functionally, plays an important role in the de novo pathway of purine nucleotide biosynthesis. Catalyzes the first committed step in the biosynthesis of AMP from IMP. The chain is Adenylosuccinate synthetase from Leptospira interrogans serogroup Icterohaemorrhagiae serovar copenhageni (strain Fiocruz L1-130).